The chain runs to 78 residues: Large ribosomal subunit protein bL28 (78 aa).

This sequence belongs to the bacterial ribosomal protein bL28 family.

The protein is Large ribosomal subunit protein bL28 of Pectobacterium carotovorum subsp. carotovorum (strain PC1).